The sequence spans 214 residues: Threonylcarbamoyl-AMP synthase (214 aa).

The 206-residue stretch at 9-214 (TDSVIQAAHW…GDALTGQIIR (206 aa)) folds into the YrdC-like domain.

Belongs to the SUA5 family. TsaC subfamily.

It localises to the cytoplasm. It catalyses the reaction L-threonine + hydrogencarbonate + ATP = L-threonylcarbamoyladenylate + diphosphate + H2O. Functionally, required for the formation of a threonylcarbamoyl group on adenosine at position 37 (t(6)A37) in tRNAs that read codons beginning with adenine. Catalyzes the conversion of L-threonine, HCO(3)(-)/CO(2) and ATP to give threonylcarbamoyl-AMP (TC-AMP) as the acyladenylate intermediate, with the release of diphosphate. This chain is Threonylcarbamoyl-AMP synthase, found in Psychrobacter arcticus (strain DSM 17307 / VKM B-2377 / 273-4).